Consider the following 193-residue polypeptide: uncharacterized protein (193 aa).

Substrate is bound at residue Arg8. The active-site Tele-phosphohistidine intermediate is His9. Residues Asn15, Gln21, and Arg58 each coordinate substrate. Glu82 acts as the Proton donor/acceptor in catalysis. Residue His139 coordinates substrate.

Belongs to the phosphoglycerate mutase family. GpmB subfamily.

In terms of biological role, phosphatase with broad substrate specificity. Does not have phosphoglycerate mutase activity. This is an uncharacterized protein from Bacillus subtilis (strain 168).